The chain runs to 161 residues: Protein-export protein SecB (161 aa).

Belongs to the SecB family. Homotetramer, a dimer of dimers. One homotetramer interacts with 1 SecA dimer.

The protein resides in the cytoplasm. In terms of biological role, one of the proteins required for the normal export of preproteins out of the cell cytoplasm. It is a molecular chaperone that binds to a subset of precursor proteins, maintaining them in a translocation-competent state. It also specifically binds to its receptor SecA. The protein is Protein-export protein SecB of Rhodopseudomonas palustris (strain BisA53).